The following is a 1357-amino-acid chain: Protein CFT1 (1357 aa).

The disordered stretch occupies residues 445–465; sequence TREAHNPSSGTNSLMDINDDD. Over residues 450-459 the composition is skewed to polar residues; that stretch reads NPSSGTNSLM.

This sequence belongs to the CFT1 family. Component of the cleavage and polyadenylation factor (CPF) complex, which is composed of at least PTI1, SYC1, SSU72, GLC7, MPE1, REF2, PFS2, PTA1, YSH1/BRR5, SWD2, CFT2/YDH1, YTH1, CFT1/YHH1, FIP1 and PAP1. Interacts with the phosphorylated CTD domain of RPB1/RNA polymerase II.

Its subcellular location is the nucleus. Functionally, RNA-binding component of the cleavage and polyadenylation factor (CPF) complex, which plays a key role in polyadenylation-dependent pre-mRNA 3'-end formation and cooperates with cleavage factors including the CFIA complex and NAB4/CFIB. Involved in poly(A) site recognition. May be involved in coupling transcription termination and mRNA 3'-end formation. The chain is Protein CFT1 (CFT1) from Saccharomyces cerevisiae (strain ATCC 204508 / S288c) (Baker's yeast).